Consider the following 301-residue polypeptide: D-alanine--D-alanine ligase A (301 aa).

The ATP-grasp domain occupies 99-293 (KRILAFGNVR…FEELLDTIIE (195 aa)). 126-181 (IENLGYPVFVKPNNGGSSVATTLVESKEAVKDAVLEALKYDTEVMIEEYIKGDEIT) is an ATP binding site. Positions 248, 260, and 262 each coordinate Mg(2+).

It belongs to the D-alanine--D-alanine ligase family. Mg(2+) serves as cofactor. The cofactor is Mn(2+).

Its subcellular location is the cytoplasm. The catalysed reaction is 2 D-alanine + ATP = D-alanyl-D-alanine + ADP + phosphate + H(+). The protein operates within cell wall biogenesis; peptidoglycan biosynthesis. In terms of biological role, cell wall formation. The protein is D-alanine--D-alanine ligase A of Clostridium perfringens (strain 13 / Type A).